Consider the following 145-residue polypeptide: NADH dehydrogenase [ubiquinone] 1 alpha subcomplex subunit 12 (145 aa).

An N-acetylmethionine modification is found at Met1.

This sequence belongs to the complex I NDUFA12 subunit family. As to quaternary structure, complex I is composed of 45 different subunits.

The protein localises to the mitochondrion inner membrane. Its function is as follows. Accessory subunit of the mitochondrial membrane respiratory chain NADH dehydrogenase (Complex I), that is believed not to be involved in catalysis. Complex I functions in the transfer of electrons from NADH to the respiratory chain. The immediate electron acceptor for the enzyme is believed to be ubiquinone. The protein is NADH dehydrogenase [ubiquinone] 1 alpha subcomplex subunit 12 (Ndufa12) of Mus musculus (Mouse).